We begin with the raw amino-acid sequence, 324 residues long: UDP-N-acetylenolpyruvoylglucosamine reductase (324 aa).

Residues 36–203 form the FAD-binding PCMH-type domain; it reads FRAGGLAELM…THAIFEGFPE (168 aa). Arg-183 is a catalytic residue. Residue Ser-232 is the Proton donor of the active site. Glu-302 is a catalytic residue.

The protein belongs to the MurB family. The cofactor is FAD.

The protein resides in the cytoplasm. It catalyses the reaction UDP-N-acetyl-alpha-D-muramate + NADP(+) = UDP-N-acetyl-3-O-(1-carboxyvinyl)-alpha-D-glucosamine + NADPH + H(+). The protein operates within cell wall biogenesis; peptidoglycan biosynthesis. Functionally, cell wall formation. The polypeptide is UDP-N-acetylenolpyruvoylglucosamine reductase (Sinorhizobium fredii (strain NBRC 101917 / NGR234)).